The following is a 395-amino-acid chain: Cation channel sperm-associated protein 3 (395 aa).

The Cytoplasmic portion of the chain corresponds to 1-48 (MSQHFHHNPVRVKSGSLFATASEALQARLSKIKRKDKECQAYFRKVIK). A helical membrane pass occupies residues 49-71 (STFFQIVMITTVTTNSFLLVLGT). Topologically, residues 72–80 (NYDIQFEFF) are extracellular. The chain crosses the membrane as a helical span at residues 81-107 (RTFEVSELFFVSVYVCEFLMKVYVDPI). Thr-108 is a topological domain (cytoplasmic). A helical membrane pass occupies residues 109-131 (YWKDGYNILDVIILIILTIPYLL). Over 132–143 (RKIKGNHSAYLH) the chain is Extracellular. The chain crosses the membrane as a helical span at residues 144–160 (FADGIQSLRILKLISYS). At 161-168 (RGIRTLII) the chain is on the cytoplasmic side. Residues 169 to 195 (AVGETVYTVASVLTLLFLLMFVFAILG) traverse the membrane as a helical segment. Residues 196–216 (FCLFGVTDRGDLENWGNLASA) are Extracellular-facing. The segment at residues 217 to 236 (FFTLFSLATVDGWTDLQEEL) is an intramembrane region (helical; Pore-forming). Over 237-242 (DKRKFT) the chain is Extracellular. The helical transmembrane segment at 243–268 (VSRAFTILFILLASFIFLNMFVGVMI) threads the bilayer. At 269 to 395 (MHTEDSMKKF…ESSSSLSGLS (127 aa)) the chain is on the cytoplasmic side.

This sequence belongs to the cation channel sperm-associated (TC 1.A.1.19) family. In terms of assembly, component of the CatSper complex or CatSpermasome composed of the core pore-forming members CATSPER1, CATSPER2, CATSPER3 and CATSPER4 as well as auxiliary members CATSPERB, CATSPERG2, CATSPERD, CATSPERE, CATSPERZ, C2CD6/CATSPERT, SLCO6C1, TMEM249, TMEM262 and EFCAB9. HSPA1 may be an additional auxiliary complex member. The core complex members CATSPER1, CATSPER2, CATSPER3 and CATSPER4 form a heterotetrameric channel. The auxiliary CATSPERB, CATSPERG2, CATSPERD and CATSPERE subunits form a pavilion-like structure over the pore which stabilizes the complex through interactions with CATSPER4, CATSPER3, CATSPER1 and CATSPER2 respectively. SLCO6C1 interacts with CATSPERE and TMEM262/CATSPERH interacts with CATSPERB, further stabilizing the complex. C2CD6/CATSPERT interacts at least with CATSPERD and is required for targeting the CatSper complex in the flagellar membrane. In terms of tissue distribution, testis-specific.

It localises to the cell projection. The protein localises to the cilium. It is found in the flagellum membrane. The catalysed reaction is Ca(2+)(in) = Ca(2+)(out). In contrast to the human ortholog, not activated by progesterone. Activated by intracellular alkalinization. Functionally, pore-forming subunit of the CatSper complex, a sperm-specific voltage-gated calcium channel that plays a central role in sperm cell hyperactivation. Controls calcium entry to mediate the hyperactivated motility, a step needed for sperm motility which is essential late in the preparation of sperm for fertilization. This chain is Cation channel sperm-associated protein 3 (Catsper3), found in Mus musculus (Mouse).